The following is a 156-amino-acid chain: ATP synthase subunit b (156 aa).

The helical transmembrane segment at 7 to 26 (ILGQAIAFVLFVWFCMKYVW) threads the bilayer.

This sequence belongs to the ATPase B chain family. As to quaternary structure, F-type ATPases have 2 components, F(1) - the catalytic core - and F(0) - the membrane proton channel. F(1) has five subunits: alpha(3), beta(3), gamma(1), delta(1), epsilon(1). F(0) has three main subunits: a(1), b(2) and c(10-14). The alpha and beta chains form an alternating ring which encloses part of the gamma chain. F(1) is attached to F(0) by a central stalk formed by the gamma and epsilon chains, while a peripheral stalk is formed by the delta and b chains.

The protein localises to the cell inner membrane. Its function is as follows. F(1)F(0) ATP synthase produces ATP from ADP in the presence of a proton or sodium gradient. F-type ATPases consist of two structural domains, F(1) containing the extramembraneous catalytic core and F(0) containing the membrane proton channel, linked together by a central stalk and a peripheral stalk. During catalysis, ATP synthesis in the catalytic domain of F(1) is coupled via a rotary mechanism of the central stalk subunits to proton translocation. Functionally, component of the F(0) channel, it forms part of the peripheral stalk, linking F(1) to F(0). This is ATP synthase subunit b from Pectobacterium atrosepticum (strain SCRI 1043 / ATCC BAA-672) (Erwinia carotovora subsp. atroseptica).